Consider the following 460-residue polypeptide: tRNA modification GTPase MnmE (460 aa).

(6S)-5-formyl-5,6,7,8-tetrahydrofolate-binding residues include arginine 25, glutamate 87, and arginine 126. A TrmE-type G domain is found at 221 to 381 (GLKVAIVGRP…LETAIANLVQ (161 aa)). Asparagine 231 contacts K(+). GTP contacts are provided by residues 231 to 236 (NVGKSS), 250 to 256 (TDLPGTT), and 275 to 278 (DTAG). Serine 235 lines the Mg(2+) pocket. Threonine 250, leucine 252, and threonine 255 together coordinate K(+). Residue threonine 256 coordinates Mg(2+). Position 460 (lysine 460) interacts with (6S)-5-formyl-5,6,7,8-tetrahydrofolate.

This sequence belongs to the TRAFAC class TrmE-Era-EngA-EngB-Septin-like GTPase superfamily. TrmE GTPase family. As to quaternary structure, homodimer. Heterotetramer of two MnmE and two MnmG subunits. K(+) is required as a cofactor.

The protein localises to the cytoplasm. In terms of biological role, exhibits a very high intrinsic GTPase hydrolysis rate. Involved in the addition of a carboxymethylaminomethyl (cmnm) group at the wobble position (U34) of certain tRNAs, forming tRNA-cmnm(5)s(2)U34. In Picosynechococcus sp. (strain ATCC 27264 / PCC 7002 / PR-6) (Agmenellum quadruplicatum), this protein is tRNA modification GTPase MnmE.